The chain runs to 643 residues: Protein disulfide-isomerase A4 (643 aa).

The first 20 residues, 1-20 (MRPRKAWMLVLLLALVQLLA), serve as a signal peptide directing secretion. Thioredoxin domains are found at residues 21-168 (VASA…EVSQ) and 170-300 (NWTP…EFLK). A disordered region spans residues 24–54 (AGAPDEDSTDKEDAIEEDEEEDEDDDDDDDD). The segment covering 27 to 54 (PDEDSTDKEDAIEEDEEEDEDDDDDDDD) has biased composition (acidic residues). Positions 90–93 (CGHC) match the CXXC motif. Intrachain disulfides connect Cys90–Cys93 and Cys205–Cys208. Lys365 carries the post-translational modification N6-acetyllysine. The Thioredoxin 3 domain occupies 503-634 (FKKGKLKPVI…LSKFIEEHAT (132 aa)). The CXXC signature appears at 553–556 (CGHC). A disulfide bond links Cys553 and Cys556. The Prevents secretion from ER signature appears at 640–643 (KEEL).

Belongs to the protein disulfide isomerase family. Part of a large chaperone multiprotein complex comprising DNAJB11, HSP90B1, HSPA5, HYOU, PDIA2, PDIA4, PDIA6, PPIB, SDF2L1, UGGT1 and very small amounts of ERP29, but not, or at very low levels, CALR nor CANX. Component of a complex containing at least CRELD2, MANF, MATN3 and PDIA4.

It is found in the endoplasmic reticulum lumen. Its subcellular location is the melanosome. The catalysed reaction is Catalyzes the rearrangement of -S-S- bonds in proteins.. This is Protein disulfide-isomerase A4 (PDIA4) from Bos taurus (Bovine).